The chain runs to 79 residues: Putative defensin-like protein 29 (79 aa).

Residues 1 to 26 (MASSGKCVFLVFLCMVALLAPSEVHA) form the signal peptide. 3 disulfides stabilise this stretch: Cys-45/Cys-65, Cys-51/Cys-74, and Cys-55/Cys-76.

It belongs to the DEFL family.

The protein resides in the secreted. This Arabidopsis thaliana (Mouse-ear cress) protein is Putative defensin-like protein 29.